Consider the following 417-residue polypeptide: MLKKTMNIADYDPELFKAIEDETLRQEEHIELIASENYTSPRVMQAQGSQLTNKYAEGYPGKRYYGGCEYVDIVETLAIERAKELFGATFANVQPHSGSQANSAVYMTLLQPGDTVLGMNLAHGGHLTHGSPVNFSGKLYNIIPYGIDETGKIDYDEMERLAVEHKPKMMIGGFSAYSGIVDWARMREIADKIGAYLFVDMAHVAGLVAAGVYPNPVPHAHVVTSTTHKTLAGPRGGIILSAANDEDLYKKLNSAVFPGGQGGPLMHVIAGKAVAFKEALEPEFKVYQQQVVTNAKAMVEVFLERGYKIVSGGTDNHLMLVDLIGRDLTGKEADAALGAANITVNKNSVPNDPRSPFITSGIRIGTPAITRRGFKEAEARELTHWICDVLDNAKDESVIARVKGQVLELCARFPVYG.

(6S)-5,6,7,8-tetrahydrofolate contacts are provided by residues Leu-121 and 125-127; that span reads GHL. The residue at position 229 (Lys-229) is an N6-(pyridoxal phosphate)lysine. A (6S)-5,6,7,8-tetrahydrofolate-binding site is contributed by 355-357; sequence SPF.

The protein belongs to the SHMT family. As to quaternary structure, homodimer. It depends on pyridoxal 5'-phosphate as a cofactor.

The protein localises to the cytoplasm. It catalyses the reaction (6R)-5,10-methylene-5,6,7,8-tetrahydrofolate + glycine + H2O = (6S)-5,6,7,8-tetrahydrofolate + L-serine. It functions in the pathway one-carbon metabolism; tetrahydrofolate interconversion. It participates in amino-acid biosynthesis; glycine biosynthesis; glycine from L-serine: step 1/1. Catalyzes the reversible interconversion of serine and glycine with tetrahydrofolate (THF) serving as the one-carbon carrier. This reaction serves as the major source of one-carbon groups required for the biosynthesis of purines, thymidylate, methionine, and other important biomolecules. Also exhibits THF-independent aldolase activity toward beta-hydroxyamino acids, producing glycine and aldehydes, via a retro-aldol mechanism. The polypeptide is Serine hydroxymethyltransferase (Shewanella amazonensis (strain ATCC BAA-1098 / SB2B)).